Consider the following 379-residue polypeptide: Leukocyte elastase inhibitor (379 aa).

Position 1 is an N-acetylmethionine (Met1). An N6-acetyllysine mark is found at Lys137 and Lys177. Ser300 carries the phosphoserine modification. The CARD-binding motif (CBM) stretch occupies residues 351–379 (NFTADHPFLFFIRHNSSGSILFLGRFSSP).

This sequence belongs to the serpin family. Ov-serpin subfamily. In terms of assembly, monomer. Interacts (via C-terminus) with CASP1; CASP4 (via CARD domain) and CASP5; these interactions regulate the activity of inflammatory caspases. Interacts with PRTN3. Interacts with GZMH. In human bone marrow, present in all CD45+ populations. Expression levels are highest in the neutrophil lineage, intermediate in monocytic, and lowest in lymphocytic lineage. Within the neutrophil lineage, expression is highest in promyelocytes.

Its subcellular location is the secreted. It is found in the cytoplasm. The protein resides in the cytolytic granule. It localises to the early endosome. Functionally, neutrophil serine protease inhibitor that plays an essential role in the regulation of the innate immune response, inflammation and cellular homeostasis. Acts primarily to protect the cell from proteases released in the cytoplasm during stress or infection. These proteases are important in killing microbes but when released from granules, these potent enzymes also destroy host proteins and contribute to mortality. Regulates the activity of the neutrophil proteases elastase, cathepsin G, proteinase-3, chymase, chymotrypsin, and kallikrein-3. Also acts as a potent intracellular inhibitor of GZMH by directly blocking its proteolytic activity. During inflammation, limits the activity of inflammatory caspases CASP1, CASP4 and CASP5 by suppressing their caspase-recruitment domain (CARD) oligomerization and enzymatic activation. When secreted, promotes the proliferation of beta-cells via its protease inhibitory function. The sequence is that of Leukocyte elastase inhibitor (SERPINB1) from Homo sapiens (Human).